Reading from the N-terminus, the 111-residue chain is Beta-2-microglobulin (111 aa).

An N-terminal signal peptide occupies residues 1-17 (MRALILLSLGLLRVAVP). An Ig-like C1-type domain is found at 20–111 (PQVVVYTYKP…KTSIYKLESF (92 aa)).

The protein belongs to the beta-2-microglobulin family. As to quaternary structure, heterodimer of an alpha chain and a beta chain. Beta-2-microglobulin is the beta-chain of major histocompatibility complex class I molecules.

It is found in the secreted. In terms of biological role, component of the class I major histocompatibility complex (MHC). Involved in the presentation of peptide antigens to the immune system. The sequence is that of Beta-2-microglobulin (b2m) from Rostroraja eglanteria (Clearnose skate).